Here is a 313-residue protein sequence, read N- to C-terminus: Tyrosine recombinase XerC (313 aa).

In terms of domain architecture, Core-binding (CB) spans 11–97 (NSLQKPLERF…SLRSFFDFLI (87 aa)). In terms of domain architecture, Tyr recombinase spans 118–298 (PLPKNLDVDE…DFQHLAQAYD (181 aa)). Residues Arg157, Lys181, His250, Arg253, and His276 contribute to the active site. The active-site O-(3'-phospho-DNA)-tyrosine intermediate is the Tyr285.

This sequence belongs to the 'phage' integrase family. XerC subfamily. In terms of assembly, forms a cyclic heterotetrameric complex composed of two molecules of XerC and two molecules of XerD.

The protein resides in the cytoplasm. Its function is as follows. Site-specific tyrosine recombinase, which acts by catalyzing the cutting and rejoining of the recombining DNA molecules. The XerC-XerD complex is essential to convert dimers of the bacterial chromosome into monomers to permit their segregation at cell division. It also contributes to the segregational stability of plasmids. In Vibrio campbellii (strain ATCC BAA-1116), this protein is Tyrosine recombinase XerC.